Consider the following 160-residue polypeptide: RNA pyrophosphohydrolase (160 aa).

A Nudix hydrolase domain is found at 10 to 154 (PYRPCVGVML…KRDVYVAVLD (145 aa)). Positions 44 to 65 (GGVEKGEDPRAAALRELWEETG) match the Nudix box motif.

Belongs to the Nudix hydrolase family. RppH subfamily. A divalent metal cation serves as cofactor.

In terms of biological role, accelerates the degradation of transcripts by removing pyrophosphate from the 5'-end of triphosphorylated RNA, leading to a more labile monophosphorylated state that can stimulate subsequent ribonuclease cleavage. This chain is RNA pyrophosphohydrolase, found in Roseobacter denitrificans (strain ATCC 33942 / OCh 114) (Erythrobacter sp. (strain OCh 114)).